We begin with the raw amino-acid sequence, 361 residues long: Mitogen-activated protein kinase 14A (361 aa).

The Protein kinase domain maps to tyrosine 25–phenylalanine 309. Residues valine 31 to valine 39 and lysine 54 each bind ATP. Aspartate 151 (proton acceptor) is an active-site residue. Residue threonine 181 is modified to Phosphothreonine; by MAP2K6. The TXY motif lies at threonine 181 to tyrosine 183. The residue at position 183 (tyrosine 183) is a Phosphotyrosine; by MAP2K6.

Belongs to the protein kinase superfamily. CMGC Ser/Thr protein kinase family. MAP kinase subfamily. Mg(2+) serves as cofactor. In terms of processing, dually phosphorylated on Thr-181 and Tyr-183, which activates the enzyme. In terms of tissue distribution, exclusively expressed in the ovary.

Its subcellular location is the cytoplasm. The protein localises to the nucleus. The enzyme catalyses L-seryl-[protein] + ATP = O-phospho-L-seryl-[protein] + ADP + H(+). The catalysed reaction is L-threonyl-[protein] + ATP = O-phospho-L-threonyl-[protein] + ADP + H(+). Activated by threonine and tyrosine phosphorylation by the dual specificity kinase, MKK6. Its function is as follows. Serine/threonine kinase which acts as an essential component of the MAP kinase signal transduction pathway. Mapk14a is one of the four p38 MAPKs which play an important role in the cascades of cellular responses evoked by extracellular stimuli such as pro-inflammatory cytokines or physical stress leading to direct activation of transcription factors. Accordingly, p38 MAPKs phosphorylate a broad range of proteins and it has been estimated that they may have approximately 200 to 300 substrates each. Some of the targets are downstream kinases which are activated through phosphorylation and further phosphorylate additional targets. The chain is Mitogen-activated protein kinase 14A (mapk14a) from Cyprinus carpio (Common carp).